A 340-amino-acid polypeptide reads, in one-letter code: DnaJ homolog subfamily B member 1 (340 aa).

Positions 2 to 70 (GKDYYQTLGL…REIFDRYGEE (69 aa)) constitute a J domain. A Phosphothreonine modification is found at Thr307.

In terms of assembly, interacts with DNAJC3. Interacts with HSF1 (via transactivation domain); this interaction results in the inhibition of heat shock- and HSF1-induced transcriptional activity during the attenuation and recovery phase period of the heat shock response. Interacts with BAG3.

It localises to the cytoplasm. The protein resides in the nucleus. Its subcellular location is the nucleolus. Its function is as follows. Interacts with HSP70 and can stimulate its ATPase activity. Stimulates the association between HSC70 and HIP. Negatively regulates heat shock-induced HSF1 transcriptional activity during the attenuation and recovery phase period of the heat shock response. Stimulates ATP hydrolysis and the folding of unfolded proteins mediated by HSPA1A/B (in vitro). The chain is DnaJ homolog subfamily B member 1 (DNAJB1) from Homo sapiens (Human).